Here is a 480-residue protein sequence, read N- to C-terminus: Adenosylmethionine-8-amino-7-oxononanoate aminotransferase (480 aa).

G126–S127 lines the pyridoxal 5'-phosphate pocket. Y160 contributes to the substrate binding site. Residue D270 coordinates pyridoxal 5'-phosphate. K314 bears the N6-(pyridoxal phosphate)lysine mark. G350 serves as a coordination point for substrate. P351–T352 contacts pyridoxal 5'-phosphate. R441 contacts substrate.

This sequence belongs to the class-III pyridoxal-phosphate-dependent aminotransferase family. BioA subfamily. Pyridoxal 5'-phosphate is required as a cofactor.

It catalyses the reaction (8S)-8-amino-7-oxononanoate + S-adenosyl-L-methionine = S-adenosyl-4-methylsulfanyl-2-oxobutanoate + (7R,8S)-7,8-diammoniononanoate. The protein operates within cofactor biosynthesis; biotin biosynthesis; 7,8-diaminononanoate from 8-amino-7-oxononanoate (SAM route): step 1/1. Functionally, catalyzes the transfer of the alpha-amino group from S-adenosyl-L-methionine (SAM) to 7-keto-8-aminopelargonic acid (KAPA) to form 7,8-diaminopelargonic acid (DAPA). It is the only aminotransferase known to utilize SAM as an amino donor. This chain is Adenosylmethionine-8-amino-7-oxononanoate aminotransferase, found in Saccharomyces cerevisiae (strain ATCC 204508 / S288c) (Baker's yeast).